Reading from the N-terminus, the 424-residue chain is Serpin E3 (424 aa).

The signal sequence occupies residues Met-1–Gly-20. Asn-46 is a glycosylation site (N-linked (GlcNAc...) asparagine). Residues Asp-143–Trp-174 are disordered. Over residues Glu-146–Gly-157 the composition is skewed to polar residues. A compositionally biased stretch (gly residues) spans Ala-163–Gly-173.

This sequence belongs to the serpin family.

It localises to the secreted. Probable serine protease inhibitor. This is Serpin E3 (SERPINE3) from Homo sapiens (Human).